Reading from the N-terminus, the 217-residue chain is 3,4-dihydroxy-2-butanone 4-phosphate synthase (217 aa).

D-ribulose 5-phosphate is bound by residues 37 to 38 (RE), D42, 150 to 154 (RQGHT), and E174. E38 lines the Mg(2+) pocket. Residue H153 coordinates Mg(2+).

It belongs to the DHBP synthase family. In terms of assembly, homodimer. It depends on Mg(2+) as a cofactor. Requires Mn(2+) as cofactor.

The catalysed reaction is D-ribulose 5-phosphate = (2S)-2-hydroxy-3-oxobutyl phosphate + formate + H(+). The protein operates within cofactor biosynthesis; riboflavin biosynthesis; 2-hydroxy-3-oxobutyl phosphate from D-ribulose 5-phosphate: step 1/1. Catalyzes the conversion of D-ribulose 5-phosphate to formate and 3,4-dihydroxy-2-butanone 4-phosphate. The polypeptide is 3,4-dihydroxy-2-butanone 4-phosphate synthase (Desulforamulus reducens (strain ATCC BAA-1160 / DSM 100696 / MI-1) (Desulfotomaculum reducens)).